The sequence spans 457 residues: Reticulophagy regulator 3 (457 aa).

Residues 1–24 (MAQRVGEEEQGASGLRRRRSGARC) form a disordered region. 3 helical membrane-spanning segments follow: residues 80–100 (FFALTSLRIIFLVAFGLMIII), 165–185 (PGKFCLLACSFLTFLAVLGGY), and 186–206 (IPGVVLSYLLLLFLLLWPLAI). Over residues 291 to 305 (ENGTFNLSRGQTPLT) the composition is skewed to polar residues. Disordered regions lie at residues 291–351 (ENGT…IPST) and 410–457 (AYAE…HSHQ). The segment covering 310–326 (DLDRHSDPEESFARDLP) has biased composition (basic and acidic residues). The segment covering 428-441 (LDTDAEADDFELLD) has biased composition (acidic residues). Residues 435 to 440 (DDFELL) carry the LIR motif motif. Over residues 443 to 457 (SELSQMDPSSSHSHQ) the composition is skewed to polar residues.

This sequence belongs to the RETREG family. Interacts with ATG8 family modifier proteins.

The protein localises to the endoplasmic reticulum membrane. Its function is as follows. Endoplasmic reticulum (ER)-anchored autophagy regulator which exists in an inactive state under basal conditions but is activated following cellular stress. When activated, induces ER fragmentation and mediates ER delivery into lysosomes through sequestration into autophagosomes via interaction with ATG8 family proteins. Promotes ER membrane curvature and ER tubulation required for subsequent ER fragmentation and engulfment into autophagosomes. This is Reticulophagy regulator 3 (retreg3) from Xenopus tropicalis (Western clawed frog).